A 185-amino-acid polypeptide reads, in one-letter code: FK506-binding protein 2 (185 aa).

Residues 1 to 20 (MQGLLLSLSLLASAAVGVLA) form the signal peptide. The 89-residue stretch at 41 to 129 (GDKINVHYKG…VFETELVGIE (89 aa)) folds into the PPIase FKBP-type domain. Positions 182–185 (HNEL) match the Prevents secretion from ER motif.

The protein belongs to the FKBP-type PPIase family. FKBP2 subfamily.

The protein resides in the endoplasmic reticulum. It carries out the reaction [protein]-peptidylproline (omega=180) = [protein]-peptidylproline (omega=0). Inhibited by both FK506 and rapamycin. In terms of biological role, PPIases accelerate the folding of proteins. It catalyzes the cis-trans isomerization of proline imidic peptide bonds in oligopeptides. The sequence is that of FK506-binding protein 2 (FPR2) from Podospora anserina (Pleurage anserina).